The following is a 213-amino-acid chain: Adenylate kinase (213 aa).

10–15 provides a ligand contact to ATP; it reads GAGKGT. Residues 30-59 form an NMP region; that stretch reads STGDMLRAAVAAGSEVGLRAKAAMESGSLV. AMP is bound by residues Thr31, Arg36, 57–59, 85–88, and Gln92; these read SLV and GFPR. The tract at residues 126 to 163 is LID; that stretch reads GRSSCEKCGEGYHDSFKPSAQPNVCDKCSGTLKRRADD. Residue Arg127 participates in ATP binding. 4 residues coordinate Zn(2+): Cys130, Cys133, Cys150, and Cys153. The AMP site is built by Arg160 and Arg171. Gln199 contributes to the ATP binding site.

This sequence belongs to the adenylate kinase family. In terms of assembly, monomer.

It localises to the cytoplasm. It catalyses the reaction AMP + ATP = 2 ADP. It functions in the pathway purine metabolism; AMP biosynthesis via salvage pathway; AMP from ADP: step 1/1. Its function is as follows. Catalyzes the reversible transfer of the terminal phosphate group between ATP and AMP. Plays an important role in cellular energy homeostasis and in adenine nucleotide metabolism. The protein is Adenylate kinase of Magnetococcus marinus (strain ATCC BAA-1437 / JCM 17883 / MC-1).